We begin with the raw amino-acid sequence, 88 residues long: U-scoloptoxin(12)-Sa1a (88 aa).

The first 20 residues, 1–20, serve as a signal peptide directing secretion; it reads MKYMIITVVILFTCALKMFC.

It belongs to the scoloptoxin-12 family. In terms of processing, contains 3 disulfide bonds. Expressed by the venom gland.

The protein localises to the secreted. This Scolopendra alternans (Florida Keys giant centipede) protein is U-scoloptoxin(12)-Sa1a.